The following is a 302-amino-acid chain: Chloramphenicol resistance protein (302 aa).

Its subcellular location is the cell membrane. Functionally, this protein is thought to be a membrane-associated barrier of drug uptake. In Escherichia coli, this protein is Chloramphenicol resistance protein (cml).